A 281-amino-acid chain; its full sequence is Light-independent protochlorophyllide reductase iron-sulfur ATP-binding protein (281 aa).

ATP is bound by residues 10–15 and lysine 39; that span reads GIGKST. Serine 14 lines the Mg(2+) pocket. Cysteine 95 and cysteine 129 together coordinate [4Fe-4S] cluster. 180–181 contacts ATP; the sequence is NR.

This sequence belongs to the NifH/BchL/ChlL family. Homodimer. Protochlorophyllide reductase is composed of three subunits; ChlL, ChlN and ChlB. [4Fe-4S] cluster serves as cofactor.

It carries out the reaction chlorophyllide a + oxidized 2[4Fe-4S]-[ferredoxin] + 2 ADP + 2 phosphate = protochlorophyllide a + reduced 2[4Fe-4S]-[ferredoxin] + 2 ATP + 2 H2O. It participates in porphyrin-containing compound metabolism; chlorophyll biosynthesis (light-independent). Its function is as follows. Component of the dark-operative protochlorophyllide reductase (DPOR) that uses Mg-ATP and reduced ferredoxin to reduce ring D of protochlorophyllide (Pchlide) to form chlorophyllide a (Chlide). This reaction is light-independent. The L component serves as a unique electron donor to the NB-component of the complex, and binds Mg-ATP. In Thermosynechococcus vestitus (strain NIES-2133 / IAM M-273 / BP-1), this protein is Light-independent protochlorophyllide reductase iron-sulfur ATP-binding protein.